The primary structure comprises 292 residues: Ribonuclease T2-like (292 aa).

Residues 1–23 form the signal peptide; that stretch reads MAKTASAMLFLYLLLSRCLLSHA. 5 disulfides stabilise this stretch: Cys42–Cys61, Cys50–Cys103, Cys60–Cys177, Cys111–Cys169, and Cys246–Cys280. Residue Asn52 is glycosylated (N-linked (GlcNAc...) asparagine). Catalysis depends on residues His96, Glu162, and His166.

Belongs to the RNase T2 family.

The protein localises to the vacuole lumen. The protein resides in the cytoplasm. The enzyme catalyses a ribonucleotidyl-ribonucleotide-RNA + H2O = a 3'-end 3'-phospho-ribonucleotide-RNA + a 5'-end dephospho-ribonucleoside-RNA + H(+). In terms of biological role, rnase which modulates cell survival under stress conditions. Released from the vacuole to the cytoplasm during stress to promote tRNA and rRNA cleavage and to activate separately a downstream pathway that promotes cell death. Involved in cell size, vacuolar morphology and growth at high temperatures and high salt concentration. The chain is Ribonuclease T2-like (RNY1) from Eremothecium gossypii (strain ATCC 10895 / CBS 109.51 / FGSC 9923 / NRRL Y-1056) (Yeast).